A 449-amino-acid polypeptide reads, in one-letter code: Ribosomal protein uS12 methylthiotransferase RimO (449 aa).

Residues 7–123 enclose the MTTase N-terminal domain; the sequence is QKVSMVSLGC…VAEILAEHHA (117 aa). Residues C16, C52, C86, C161, C165, and C168 each contribute to the [4Fe-4S] cluster site. Residues 147–377 form the Radical SAM core domain; the sequence is SSPGWYAYLK…MKTQARVSFR (231 aa). Residues 380 to 448 enclose the TRAM domain; that stretch reads RAMVGQTEQV…DYDLVAEMIE (69 aa).

The protein belongs to the methylthiotransferase family. RimO subfamily. [4Fe-4S] cluster is required as a cofactor.

The protein resides in the cytoplasm. The enzyme catalyses L-aspartate(89)-[ribosomal protein uS12]-hydrogen + (sulfur carrier)-SH + AH2 + 2 S-adenosyl-L-methionine = 3-methylsulfanyl-L-aspartate(89)-[ribosomal protein uS12]-hydrogen + (sulfur carrier)-H + 5'-deoxyadenosine + L-methionine + A + S-adenosyl-L-homocysteine + 2 H(+). Catalyzes the methylthiolation of an aspartic acid residue of ribosomal protein uS12. The sequence is that of Ribosomal protein uS12 methylthiotransferase RimO from Trichlorobacter lovleyi (strain ATCC BAA-1151 / DSM 17278 / SZ) (Geobacter lovleyi).